The following is a 221-amino-acid chain: UPF0758 protein Ent638_0101 (221 aa).

The region spanning 99–221 (PLLSPEMTKD…YVSFAEQGWI (123 aa)) is the MPN domain. The Zn(2+) site is built by H170, H172, and D183. A JAMM motif motif is present at residues 170–183 (HNHPSGCAEPSKAD).

It belongs to the UPF0758 family. YicR subfamily.

This is UPF0758 protein Ent638_0101 from Enterobacter sp. (strain 638).